The primary structure comprises 255 residues: MSTDLHWQTQGQGPDLVLLHGWGMNGAVWQQVVERLELHFRLHVVDLPGYGHSAHLHAASLEEIAQQLLEHAPKQAIWVGWSLGGLVATHMALHHADYVSKLVTVASSPKFAAEARWRGIQPQVLSAFTEQLSEDFHTTVERFMALQAMGSPSARQDVKNLKQAVFSRPQPNPQSLLAGLQMLAEVDLRDHLPHLTMPMLRLYGRLDGLVPIKVAQDLEKVLPASEQFIFTQSSHAPFITEPESFCHQLLSFAGK.

An AB hydrolase-1 domain is found at 16–242 (LVLLHGWGMN…SSHAPFITEP (227 aa)). Residues Trp-22, 82 to 83 (SL), and 143 to 147 (FMALQ) each bind substrate. Ser-82 acts as the Nucleophile in catalysis. Active-site residues include Asp-207 and His-235. His-235 serves as a coordination point for substrate.

Belongs to the AB hydrolase superfamily. Carboxylesterase BioH family. Monomer.

It is found in the cytoplasm. It carries out the reaction 6-carboxyhexanoyl-[ACP] methyl ester + H2O = 6-carboxyhexanoyl-[ACP] + methanol + H(+). Its pathway is cofactor biosynthesis; biotin biosynthesis. Its function is as follows. The physiological role of BioH is to remove the methyl group introduced by BioC when the pimeloyl moiety is complete. It allows to synthesize pimeloyl-ACP via the fatty acid synthetic pathway through the hydrolysis of the ester bonds of pimeloyl-ACP esters. The chain is Pimeloyl-[acyl-carrier protein] methyl ester esterase from Vibrio vulnificus (strain CMCP6).